A 155-amino-acid polypeptide reads, in one-letter code: Ribosome maturation factor RimP (155 aa).

It belongs to the RimP family.

The protein localises to the cytoplasm. Required for maturation of 30S ribosomal subunits. The polypeptide is Ribosome maturation factor RimP (Staphylococcus epidermidis (strain ATCC 35984 / DSM 28319 / BCRC 17069 / CCUG 31568 / BM 3577 / RP62A)).